The chain runs to 35 residues: Photosystem II reaction center protein T (35 aa).

The helical transmembrane segment at 3–23 (ALVYTFLLVSTLGIIFFAIFF) threads the bilayer.

It belongs to the PsbT family. As to quaternary structure, PSII is composed of 1 copy each of membrane proteins PsbA, PsbB, PsbC, PsbD, PsbE, PsbF, PsbH, PsbI, PsbJ, PsbK, PsbL, PsbM, PsbT, PsbY, PsbZ, Psb30/Ycf12, at least 3 peripheral proteins of the oxygen-evolving complex and a large number of cofactors. It forms dimeric complexes.

The protein localises to the plastid. It localises to the chloroplast thylakoid membrane. Found at the monomer-monomer interface of the photosystem II (PS II) dimer, plays a role in assembly and dimerization of PSII. PSII is a light-driven water plastoquinone oxidoreductase, using light energy to abstract electrons from H(2)O, generating a proton gradient subsequently used for ATP formation. The protein is Photosystem II reaction center protein T of Ginkgo biloba (Ginkgo).